A 90-amino-acid chain; its full sequence is RING finger protein Z (90 aa).

Glycine 2 is lipidated: N-myristoyl glycine; by host. The RING-type; atypical zinc finger occupies 32–68 (CKSCWQKFDSLVRCHDHYLCRHCLNLLLSVSDRCPLC). Positions 85–88 (PPPY) match the PPXY motif motif.

This sequence belongs to the arenaviridae Z protein family. In terms of assembly, interacts with protein NP; this interaction probably directs the encapsidated genome to budding sites. Interacts (via RING-type zinc finger) with polymerase L; this interaction inhibits viral transcription and replication, Z partially blocks the product exit tunnel for the releasing nascent RNA product. Interacts with the glycoprotein complex; this interaction plays a role in virion budding. Interacts (via RING-type zinc finger) with host EIF4E; this interaction results in conformational changes of both interacting proteins and reduces EIF4E affinity for its substrate, the 5'-m7 G cap structure. Interacts (via late-budding domain) with host TSG101; this interaction is essential for budding and release of viral particles. Interacts with host RPLP0; this interaction may serve to load ribosome-like particles inside the virion. Interacts with host PML; this interaction induces PML bodies redistribution in the cytoplasm upon viral infection. Post-translationally, myristoylation is required for the role of RING finger protein Z in assembly and budding.

It localises to the virion. Its subcellular location is the host cytoplasm. The protein resides in the host perinuclear region. It is found in the host cell membrane. Plays a crucial role in virion assembly and budding. Expressed late in the virus life cycle, it acts as an inhibitor of viral transcription and RNA synthesis by interacting with the viral polymerase L. Presumably recruits the NP encapsidated genome to cellular membranes at budding sites via direct interaction with NP. Plays critical roles in the final steps of viral release by interacting with host TSG101, a member of the vacuolar protein-sorting pathway and using other cellular host proteins involved in vesicle formation pathway. The budding of the virus progeny occurs after association of protein Z with the viral glycoprotein complex SSP-GP1-GP2 at the cell periphery, step that requires myristoylation of protein Z. Also selectively represses protein production by associating with host EIF4E. In cell-based minigenome assay, has an inhibitory effect on the ribonucleoprotein machinery (vRNP), which is responsible for the replication and transcription of the viral genome. The chain is RING finger protein Z from Homo sapiens (Human).